A 604-amino-acid chain; its full sequence is Lipid-A-disaccharide synthase (604 aa).

Positions 1 to 220 (MIPSGLVYLL…YKEQRSTPYL (220 aa)) are unknown. The segment at 221-604 (DTHCFLSAGE…KRIFDTLPAV (384 aa)) is lipid-A-disaccharide synthase.

The protein in the C-terminal section; belongs to the LpxB family.

The catalysed reaction is a lipid X + a UDP-2-N,3-O-bis[(3R)-3-hydroxyacyl]-alpha-D-glucosamine = a lipid A disaccharide + UDP + H(+). The protein operates within bacterial outer membrane biogenesis; LPS lipid A biosynthesis. In terms of biological role, condensation of UDP-2,3-diacylglucosamine and 2,3-diacylglucosamine-1-phosphate to form lipid A disaccharide, a precursor of lipid A, a phosphorylated glycolipid that anchors the lipopolysaccharide to the outer membrane of the cell. In Chlamydia pneumoniae (Chlamydophila pneumoniae), this protein is Lipid-A-disaccharide synthase (lpxB).